Reading from the N-terminus, the 644-residue chain is Threonine--tRNA ligase (644 aa).

One can recognise a TGS domain in the interval 1 to 61; the sequence is MVAITLPDGN…TQDASVEIVT (61 aa). Residues 242 to 533 form a catalytic region; sequence DHRKIGKALN…LIEHYAGWMP (292 aa). Positions 333, 384, and 510 each coordinate Zn(2+).

Belongs to the class-II aminoacyl-tRNA synthetase family. In terms of assembly, homodimer. It depends on Zn(2+) as a cofactor.

The protein localises to the cytoplasm. It catalyses the reaction tRNA(Thr) + L-threonine + ATP = L-threonyl-tRNA(Thr) + AMP + diphosphate + H(+). In terms of biological role, catalyzes the attachment of threonine to tRNA(Thr) in a two-step reaction: L-threonine is first activated by ATP to form Thr-AMP and then transferred to the acceptor end of tRNA(Thr). Also edits incorrectly charged L-seryl-tRNA(Thr). This chain is Threonine--tRNA ligase, found in Psychrobacter sp. (strain PRwf-1).